The chain runs to 410 residues: 2-oxoglutarate-dependent dioxygenase AOP3 (410 aa).

One can recognise a Fe2OG dioxygenase domain in the interval 258–355 (GNASVGAKEA…RYAAALFSNP (98 aa)). Positions 278, 280, and 335 each coordinate Fe cation. Residue R346 participates in 2-oxoglutarate binding.

Belongs to the iron/ascorbate-dependent oxidoreductase family. Fe(2+) is required as a cofactor.

Its function is as follows. 2-oxoglutarate-dependent dioxygenase involved in glucosinolates biosynthesis. Catalyzes the conversion of methylsulfinylalkyl glucosinolates to hydroxyalkyl glucosinolates. The polypeptide is 2-oxoglutarate-dependent dioxygenase AOP3 (AOP3) (Arabidopsis thaliana (Mouse-ear cress)).